The chain runs to 544 residues: Lysophosphatidylcholine acyltransferase 2 (544 aa).

Residues 1-58 are Cytoplasmic-facing; it reads MNRCAEAAAVAATVPGSGVGDSGLRPPMVPRQASFFPPPVPNPFVQQTRISAARRLQM. A helical; Signal-anchor for type II membrane protein membrane pass occupies residues 59–79; the sequence is ILLGIILLPVRALLVGLVLLL. Residues 80-544 are Lumenal-facing; sequence AWPFAVISTV…EEGTSGKKVD (465 aa). Positions 146–151 match the HXXXXD motif motif; it reads HSTFFD. Residues 220–223 carry the EGTC motif motif; the sequence is EGTC. EF-hand domains are found at residues 391 to 426 and 428 to 463; these read PVSD…LCNP and NTED…SLGV. Positions 404, 406, 408, 410, 415, 441, 443, 445, 447, and 452 each coordinate Ca(2+). The segment covering 520–530 has biased composition (polar residues); it reads TAPSVASNKVS. Residues 520–544 are disordered; sequence TAPSVASNKVSPESHEEGTSGKKVD. The segment covering 531–544 has biased composition (basic and acidic residues); that stretch reads PESHEEGTSGKKVD.

This sequence belongs to the 1-acyl-sn-glycerol-3-phosphate acyltransferase family.

The protein localises to the endoplasmic reticulum membrane. It localises to the golgi apparatus membrane. It is found in the cell membrane. Its subcellular location is the lipid droplet. The catalysed reaction is a 1-acyl-sn-glycero-3-phosphocholine + an acyl-CoA = a 1,2-diacyl-sn-glycero-3-phosphocholine + CoA. The enzyme catalyses a 1-O-alkyl-sn-glycero-3-phosphocholine + acetyl-CoA = a 1-O-alkyl-2-acetyl-sn-glycero-3-phosphocholine + CoA. It carries out the reaction a 1-acyl-sn-glycero-3-phosphate + an acyl-CoA = a 1,2-diacyl-sn-glycero-3-phosphate + CoA. It catalyses the reaction a 1-O-(1Z-alkenyl)-sn-glycero-3-phosphocholine + an acyl-CoA = a 1-O-(1Z-alkenyl)-2-acyl-sn-glycero-3-phosphocholine + CoA. The catalysed reaction is 1-hexadecanoyl-sn-glycero-3-phosphate + (9Z)-octadecenoyl-CoA = 1-hexadecanoyl-2-(9Z-octadecenoyl)-sn-glycero-3-phosphate + CoA. The enzyme catalyses 1-(9Z-octadecenoyl)-sn-glycero-3-phosphate + (9Z)-octadecenoyl-CoA = 1,2-di-(9Z-octadecenoyl)-sn-glycero-3-phosphate + CoA. It carries out the reaction 1-(9Z-octadecenoyl)-sn-glycero-3-phosphate + hexadecanoyl-CoA = 1-(9Z)-octadecenoyl-2-hexadecanoyl-sn-glycero-3-phosphate + CoA. It catalyses the reaction 1-heptadecanoyl-sn-glycero-3-phosphate + (9Z)-octadecenoyl-CoA = 1-heptadecanoyl-2-(9Z)-octadecenoyl-sn-glycero-3-phosphate + CoA. The catalysed reaction is 1-octadecanoyl-sn-glycero-3-phosphate + (9Z)-octadecenoyl-CoA = 1-octadecanoyl-2-(9Z-octadecenoyl)-sn-glycero-3-phosphate + CoA. The enzyme catalyses heptadecanoyl-CoA + 1-(9Z-octadecenoyl)-sn-glycero-3-phosphate = 1-(9Z)-octadecenoyl-2-heptadecanoyl-sn-glycero-3-phosphate + CoA. It carries out the reaction 1-(9Z-octadecenoyl)-sn-glycero-3-phosphate + (9Z,12Z)-octadecadienoyl-CoA = 1-(9Z)-octadecenoyl-2-(9Z,12Z)-octadecadienoyl-sn-glycero-3-phosphate + CoA. It catalyses the reaction 1-(9Z-octadecenoyl)-sn-glycero-3-phosphate + tetradecanoyl-CoA = 1-(9Z)-octadecenoyl-2-tetradecanoyl-sn-glycero-3-phosphate + CoA. The catalysed reaction is pentadecanoyl-CoA + 1-(9Z-octadecenoyl)-sn-glycero-3-phosphate = 1-(9Z)-octadecenoyl-2-pentadecanoyl-sn-glycero-3-phosphate + CoA. The enzyme catalyses nonadecanoyl-CoA + 1-(9Z-octadecenoyl)-sn-glycero-3-phosphate = 1-(9Z)-octadecenoyl-2-nonadecanoyl-sn-glycero-3-phosphate + CoA. It carries out the reaction 1-hexadecanoyl-sn-glycero-3-phosphocholine + (9Z)-octadecenoyl-CoA = 1-hexadecanoyl-2-(9Z-octadecenoyl)-sn-glycero-3-phosphocholine + CoA. It catalyses the reaction 1-O-hexadecyl-sn-glycero-3-phosphocholine + acetyl-CoA = 1-O-hexadecyl-2-acetyl-sn-glycero-3-phosphocholine + CoA. The catalysed reaction is 1-O-octadecyl-sn-glycero-3-phosphocholine + acetyl-CoA = 1-O-octadecyl-2-acetyl-sn-glycero-3-phosphocholine + CoA. The enzyme catalyses 1-hexadecanoyl-sn-glycero-3-phosphocholine + acetyl-CoA = 1-hexadecanoyl-2-acetyl-sn-glycero-3-phosphocholine + CoA. It carries out the reaction 1-octadecanoyl-sn-glycero-3-phosphocholine + acetyl-CoA = 1-octadecanoyl-2-acetyl-sn-glycero-3-phosphocholine + CoA. It catalyses the reaction a 1-O-(1Z-alkenyl)-sn-glycero-3-phosphocholine + acetyl-CoA = 1-O-(1Z)-alkenyl-2-acetyl-sn-glycero-3-phosphocholine + CoA. The catalysed reaction is 1-O-octadecyl-sn-glycero-3-phosphocholine + (5Z,8Z,11Z,14Z)-eicosatetraenoyl-CoA = 1-O-octadecyl-2-(5Z,8Z,11Z,14Z)-eicosatetraenoyl-sn-glycero-3-phosphocholine + CoA. It functions in the pathway lipid metabolism; phospholipid metabolism. Exhibits both acyltransferase and acetyltransferase activities. Activity is calcium-dependent. Catalyzes the conversion of lysophosphatidylcholine (1-acyl-sn-glycero-3-phosphocholine or LPC) into phosphatidylcholine (1,2-diacyl-sn-glycero-3-phosphocholine or PC). Catalyzes the conversion 1-acyl-sn-glycerol-3-phosphate (lysophosphatidic acid or LPA) into 1,2-diacyl-sn-glycerol-3-phosphate (phosphatidic acid or PA) by incorporating an acyl moiety at the sn-2 position of the glycerol backbone. Involved in platelet-activating factor (PAF) biosynthesis by catalyzing the conversion of the PAF precursor, 1-O-alkyl-sn-glycero-3-phosphocholine (lyso-PAF) into 1-O-alkyl-2-acetyl-sn-glycero-3-phosphocholine (PAF). Also converts lyso-PAF to 1-O-alkyl-2-acyl-sn-glycero-3-phosphocholine (PC), a major component of cell membranes and a PAF precursor. Under resting conditions, acyltransferase activity is preferred. Upon acute inflammatory stimulus, acetyltransferase activity is enhanced and PAF synthesis increases. Involved in the regulation of lipid droplet number and size. In Rattus norvegicus (Rat), this protein is Lysophosphatidylcholine acyltransferase 2 (Lpcat2).